Reading from the N-terminus, the 263-residue chain is Ubiquinone/menaquinone biosynthesis C-methyltransferase UbiE (263 aa).

T86, D107, and S152 together coordinate S-adenosyl-L-methionine.

The protein belongs to the class I-like SAM-binding methyltransferase superfamily. MenG/UbiE family.

The enzyme catalyses a 2-demethylmenaquinol + S-adenosyl-L-methionine = a menaquinol + S-adenosyl-L-homocysteine + H(+). It catalyses the reaction a 2-methoxy-6-(all-trans-polyprenyl)benzene-1,4-diol + S-adenosyl-L-methionine = a 5-methoxy-2-methyl-3-(all-trans-polyprenyl)benzene-1,4-diol + S-adenosyl-L-homocysteine + H(+). Its pathway is quinol/quinone metabolism; menaquinone biosynthesis; menaquinol from 1,4-dihydroxy-2-naphthoate: step 2/2. It functions in the pathway cofactor biosynthesis; ubiquinone biosynthesis. Functionally, methyltransferase required for the conversion of demethylmenaquinol (DMKH2) to menaquinol (MKH2) and the conversion of 2-polyprenyl-6-methoxy-1,4-benzoquinol (DDMQH2) to 2-polyprenyl-3-methyl-6-methoxy-1,4-benzoquinol (DMQH2). This chain is Ubiquinone/menaquinone biosynthesis C-methyltransferase UbiE, found in Brucella anthropi (strain ATCC 49188 / DSM 6882 / CCUG 24695 / JCM 21032 / LMG 3331 / NBRC 15819 / NCTC 12168 / Alc 37) (Ochrobactrum anthropi).